A 224-amino-acid polypeptide reads, in one-letter code: Small ribosomal subunit protein uS3 (224 aa).

One can recognise a KH type-2 domain in the interval 38 to 106; sequence LREFVKEKLG…EVYLNVVEVR (69 aa).

The protein belongs to the universal ribosomal protein uS3 family. Part of the 30S ribosomal subunit. Forms a tight complex with proteins S10 and S14.

Its function is as follows. Binds the lower part of the 30S subunit head. Binds mRNA in the 70S ribosome, positioning it for translation. This is Small ribosomal subunit protein uS3 from Anaeromyxobacter dehalogenans (strain 2CP-1 / ATCC BAA-258).